We begin with the raw amino-acid sequence, 210 residues long: Thymidylate kinase (210 aa).

An ATP-binding site is contributed by 10 to 17 (GLEGAGKS).

Belongs to the thymidylate kinase family.

It catalyses the reaction dTMP + ATP = dTDP + ADP. In terms of biological role, phosphorylation of dTMP to form dTDP in both de novo and salvage pathways of dTTP synthesis. The protein is Thymidylate kinase (tmk) of Haemophilus influenzae (strain ATCC 51907 / DSM 11121 / KW20 / Rd).